Here is a 310-residue protein sequence, read N- to C-terminus: Vomeronasal type-1 receptor 40 (310 aa).

The Extracellular segment spans residues 1 to 20; the sequence is MNKANMLRTDKDMQIILFSE. A helical transmembrane segment spans residues 21–41; it reads VSVGISANSILFIAHVCMILG. The Cytoplasmic portion of the chain corresponds to 42 to 50; that stretch reads ENRPKPIDL. A helical transmembrane segment spans residues 51-71; sequence YIAFLSLTQLMLLITMGLIAV. The Extracellular segment spans residues 72–93; the sequence is DMFLSQGIWDSTTCQSLIYLHR. An intrachain disulfide couples Cys-85 to Cys-172. A helical transmembrane segment spans residues 94-114; sequence LLRGLSLCATCLLNILWTITL. At 115 to 134 the chain is on the cytoplasmic side; that stretch reads SSRSFCSTKFKHKSPHHISG. Residues 135–155 traverse the membrane as a helical segment; sequence AFIFFCVLYMSFSSHLFISII. Topologically, residues 156-190 are extracellular; the sequence is ATHNLTSENFIYVTQSCSLLPLSYSRTSMFSAPMA. Asn-159 carries an N-linked (GlcNAc...) asparagine glycan. The helical transmembrane segment at 191-211 threads the bilayer; that stretch reads IREAFLVSLMALSSGYMVALL. The Cytoplasmic segment spans residues 212-238; the sequence is WRHKKQAQHLHSTSLSSKASPEQRATR. Residues 239 to 259 traverse the membrane as a helical segment; the sequence is TILLLMSFFVVLYILENAVFY. Over 260–268 the chain is Extracellular; sequence SRIKFKDGS. The helical transmembrane segment at 269–289 threads the bilayer; it reads ILYCVQIILCHSYATVNPFVF. Residues 290–310 are Cytoplasmic-facing; that stretch reads ICTEKHIIKFWESKCGRIVNI.

It belongs to the G-protein coupled receptor 1 family.

The protein resides in the cell membrane. Putative pheromone receptor implicated in the regulation of social and reproductive behavior. The polypeptide is Vomeronasal type-1 receptor 40 (Vmn1r40) (Mus musculus (Mouse)).